A 155-amino-acid polypeptide reads, in one-letter code: Endoribonuclease YbeY (155 aa).

Zn(2+) contacts are provided by histidine 114, histidine 118, and histidine 124.

This sequence belongs to the endoribonuclease YbeY family. It depends on Zn(2+) as a cofactor.

Its subcellular location is the cytoplasm. Single strand-specific metallo-endoribonuclease involved in late-stage 70S ribosome quality control and in maturation of the 3' terminus of the 16S rRNA. This is Endoribonuclease YbeY from Citrobacter koseri (strain ATCC BAA-895 / CDC 4225-83 / SGSC4696).